Reading from the N-terminus, the 108-residue chain is MTSFAIYVLAALAEIAGCFGFWAWLRLGKSPAWAVLGVLSLVIFALLLTRIEAGAAGRAFAAYGGVYIIASLAWMQVVEGARPDRWDLIGGVICLAGAALILFGPRTN.

Transmembrane regions (helical) follow at residues 4–24 (FAIY…FWAW), 27–47 (LGKS…FALL), 59–79 (AFAA…QVVE), and 85–105 (RWDL…LFGP).

This sequence belongs to the UPF0060 family.

The protein resides in the cell inner membrane. This is UPF0060 membrane protein CC_1976 from Caulobacter vibrioides (strain ATCC 19089 / CIP 103742 / CB 15) (Caulobacter crescentus).